Consider the following 789-residue polypeptide: Disintegrin and metalloproteinase domain-containing protein 7 (789 aa).

Positions 1–23 are cleaved as a signal peptide; the sequence is MLTTGIFWMTVLISHIQERGIVG. Positions 24 to 176 are excised as a propeptide; it reads VEGQELVHPK…NHSCVGLNFT (153 aa). The Extracellular portion of the chain corresponds to 24 to 667; the sequence is VEGQELVHPK…EWGEALNLTS (644 aa). 3 N-linked (GlcNAc...) asparagine glycosylation sites follow: asparagine 84, asparagine 167, and asparagine 174. The Peptidase M12B domain maps to 199-393; that stretch reads KFIELFVVAD…QKPACILNNP (195 aa). 4 cysteine pairs are disulfide-bonded: cysteine 310-cysteine 388, cysteine 350-cysteine 372, cysteine 352-cysteine 357, and cysteine 459-cysteine 479. In terms of domain architecture, Disintegrin spans 401–487; sequence YPFCGNKKVD…ECPKDEFQAN (87 aa). N-linked (GlcNAc...) asparagine glycans are attached at residues asparagine 583, asparagine 628, and asparagine 664. A helical membrane pass occupies residues 668-689; it reads VSIMVIVLVMVIIGVGLVILLI. Residues 690-789 are Cytoplasmic-facing; it reads RYQKCIKMKQ…DTQSGCERLG (100 aa). The tract at residues 764-789 is disordered; the sequence is RGIADPKQTDNVNLNLDTQSGCERLG. The span at 772–789 shows a compositional bias: polar residues; sequence TDNVNLNLDTQSGCERLG.

In terms of assembly, interacts with ITM2B in sperm; the interaction increases following capacitation. Interacts with HSPA5 and CANX. Expressed in both the head and tails of sperm (at protein level). Expressed in the epididymis (at protein level). Abundantly expressed in the apical region of the proximal caput epididymal epithelium, with decreasing expression in the mid and distal caput epididymal epithelium.

It is found in the membrane. Functionally, required for normal male fertility via maintenance of epithelial cell morphology in the caput epididymis and subsequently correct epididymis lumen structure required for sperm development. Plays a role in sperm motility, flagella morphology and tyrosine phosphorylation during sperm capacitance. Plays a role in normal expression levels of HSPA5, ITM2B and ADAM2 in sperm both prior to and post-capacitation. This is a non catalytic metalloprotease-like protein. This Mus musculus (Mouse) protein is Disintegrin and metalloproteinase domain-containing protein 7.